Reading from the N-terminus, the 952-residue chain is Isoleucine--tRNA ligase (952 aa).

A 'HIGH' region motif is present at residues 58–68 (PYANGDIHIGH). Residue Glu-576 coordinates L-isoleucyl-5'-AMP. Residues 617–621 (KMSKS) carry the 'KMSKS' region motif. An ATP-binding site is contributed by Lys-620. Zn(2+)-binding residues include Cys-915, Cys-918, Cys-935, and Cys-938.

This sequence belongs to the class-I aminoacyl-tRNA synthetase family. IleS type 1 subfamily. Monomer. Zn(2+) serves as cofactor.

Its subcellular location is the cytoplasm. The catalysed reaction is tRNA(Ile) + L-isoleucine + ATP = L-isoleucyl-tRNA(Ile) + AMP + diphosphate. In terms of biological role, catalyzes the attachment of isoleucine to tRNA(Ile). As IleRS can inadvertently accommodate and process structurally similar amino acids such as valine, to avoid such errors it has two additional distinct tRNA(Ile)-dependent editing activities. One activity is designated as 'pretransfer' editing and involves the hydrolysis of activated Val-AMP. The other activity is designated 'posttransfer' editing and involves deacylation of mischarged Val-tRNA(Ile). This is Isoleucine--tRNA ligase from Aliivibrio fischeri (strain MJ11) (Vibrio fischeri).